We begin with the raw amino-acid sequence, 361 residues long: Peptide chain release factor 1 (361 aa).

Gln235 is modified (N5-methylglutamine). The segment at 288–307 is disordered; it reads AARSADRKDQVGSGDRSERI.

This sequence belongs to the prokaryotic/mitochondrial release factor family. In terms of processing, methylated by PrmC. Methylation increases the termination efficiency of RF1.

The protein localises to the cytoplasm. Its function is as follows. Peptide chain release factor 1 directs the termination of translation in response to the peptide chain termination codons UAG and UAA. This is Peptide chain release factor 1 from Nitrobacter hamburgensis (strain DSM 10229 / NCIMB 13809 / X14).